We begin with the raw amino-acid sequence, 587 residues long: Phosphatidylinositol-3-phosphatase SAC1 (587 aa).

Residues 1 to 520 (MAATAYEHLK…SPLSVPRDWK (520 aa)) lie on the Cytoplasmic side of the membrane. The SAC domain occupies 122-451 (LNHVLSTDGF…ANACAKQYAG (330 aa)). The tract at residues 452 to 587 (TGALKTDFTR…PRLVQKEKID (136 aa)) is essential for phosphatidylinositol-4-phosphate phosphatase activity. The residue at position 456 (Lys456) is an N6-acetyllysine. Residues 521–541 (FLALPIIMVVAFSMCIICLLM) traverse the membrane as a helical segment. Residues 542 to 548 (AGDTWTE) are Lumenal-facing. The chain crosses the membrane as a helical span at residues 549–569 (TLAYVLFWGVASIGTFFIILY). Topologically, residues 570-587 (NGKDFVDAPRLVQKEKID) are cytoplasmic.

As to quaternary structure, interacts with TMEM39A. Interacts with SEC23A and SEC24A; this interaction is reduced in the absence of TMEM39A. Interacts with PLEKHA3 and VAPA and/or VAPB to form a ternary complex. In terms of tissue distribution, detected in spleen, lung, liver, skeletal muscle, kidney, testis and in cerebellar Purkinje cells (at protein level). Ubiquitous. Highly expressed in brain, spleen, liver and kidney.

The protein localises to the endoplasmic reticulum membrane. It localises to the golgi apparatus membrane. The enzyme catalyses a 1,2-diacyl-sn-glycero-3-phospho-(1D-myo-inositol-3-phosphate) + H2O = a 1,2-diacyl-sn-glycero-3-phospho-(1D-myo-inositol) + phosphate. It carries out the reaction a 1,2-diacyl-sn-glycero-3-phospho-(1D-myo-inositol 4-phosphate) + H2O = a 1,2-diacyl-sn-glycero-3-phospho-(1D-myo-inositol) + phosphate. In terms of biological role, phosphoinositide phosphatase which catalyzes the hydrolysis of phosphatidylinositol 4-phosphate (PtdIns(4)P), phosphatidylinositol 3-phosphate (PtdIns(3)P) and has low activity towards phosphatidylinositol-3,5-bisphosphate (PtdIns(3,5)P2). Shows a very robust PtdIns(4)P phosphatase activity when it binds PtdIns(4)P in a 'cis' configuration in the cellular environment, with much less activity seen when it binds PtdIns(4)P in 'trans' configuration. PtdIns(4)P phosphatase activity (when it binds PtdIns(4)P in 'trans' configuration) is enhanced in the presence of PLEKHA3. The sequence is that of Phosphatidylinositol-3-phosphatase SAC1 (Sacm1l) from Rattus norvegicus (Rat).